We begin with the raw amino-acid sequence, 671 residues long: DNA ligase (671 aa).

NAD(+) contacts are provided by residues 37–41, 86–87, and Glu117; these read DIEYD and SL. Residue Lys119 is the N6-AMP-lysine intermediate of the active site. Residues Arg140, Glu177, Lys295, and Lys319 each contribute to the NAD(+) site. Zn(2+) is bound by residues Cys413, Cys416, Cys431, and Cys437. The 78-residue stretch at 594–671 folds into the BRCT domain; the sequence is IISAAVFGKT…DEEEMLNLLK (78 aa).

The protein belongs to the NAD-dependent DNA ligase family. LigA subfamily. The cofactor is Mg(2+). Requires Mn(2+) as cofactor.

The enzyme catalyses NAD(+) + (deoxyribonucleotide)n-3'-hydroxyl + 5'-phospho-(deoxyribonucleotide)m = (deoxyribonucleotide)n+m + AMP + beta-nicotinamide D-nucleotide.. DNA ligase that catalyzes the formation of phosphodiester linkages between 5'-phosphoryl and 3'-hydroxyl groups in double-stranded DNA using NAD as a coenzyme and as the energy source for the reaction. It is essential for DNA replication and repair of damaged DNA. The polypeptide is DNA ligase (Polynucleobacter asymbioticus (strain DSM 18221 / CIP 109841 / QLW-P1DMWA-1) (Polynucleobacter necessarius subsp. asymbioticus)).